A 3262-amino-acid chain; its full sequence is Striated muscle-specific serine/threonine-protein kinase (3262 aa).

The disordered stretch occupies residues 1–33 (MQKARGTRGEDAGTRAPPSPGVPPKRAKVGAGR). Omega-N-methylarginine is present on arginine 33. One can recognise an Ig-like 1 domain in the interval 45–126 (PVFLRPLKNA…GQASCEAVLT (82 aa)). Serine 141 carries the post-translational modification Phosphoserine. 4 disordered regions span residues 155-185 (RAFS…TSEE), 198-226 (EQEA…GPRH), 280-720 (GLHR…VSAG), and 814-875 (LAVR…APPT). The span at 158-185 (STPTGGSDTLVGTSLDTPPTSVTGTSEE) shows a compositional bias: polar residues. Over residues 301-317 (PALPPPSKSALLPPPSP) the composition is skewed to pro residues. Serine 368 and serine 375 each carry phosphoserine. At threonine 379 the chain carries Phosphothreonine. Residues serine 382 and serine 385 each carry the phosphoserine modification. The span at 404–422 (ILDKLQFFEERRRSLERSD) shows a compositional bias: basic and acidic residues. Serine 423 carries the phosphoserine modification. At threonine 453 the chain carries Phosphothreonine. Residues serine 457, serine 463, serine 493, serine 511, and serine 531 each carry the phosphoserine modification. The segment covering 459–473 (EELRSPRGSVAERRR) has biased composition (basic and acidic residues). Over residues 510-522 (TSREELVRSHESL) the composition is skewed to basic and acidic residues. The segment covering 543–552 (RPSTPKTSRA) has biased composition (polar residues). Serine 554 is modified (phosphoserine). Basic and acidic residues-rich tracts occupy residues 624 to 638 (PESR…KREP) and 663 to 680 (EKNR…RGPE). Residues 727–815 (PVFEIPLQNM…GQATCASSLA (89 aa)) enclose the Ig-like 2 domain. Polar residues predominate over residues 820–830 (GSTSPFSSPIT). Ig-like domains lie at 874–963 (PTFK…ARLE), 968–1062 (PESR…ARLT), and 1069–1157 (PLFT…AQLY). Cysteine 994 and cysteine 1046 are oxidised to a cystine. A phosphoserine mark is found at serine 1133 and serine 1177. Positions 1162–1185 (RTAASGPSSKLEKMPSIPEEPEHG) are disordered. Residues 1193–1283 (PDFLRPLQDL…AACYAHLYVT (91 aa)) enclose the Ig-like 6 domain. The 98-residue stretch at 1290-1387 (PDGAPEVVAV…PSEPVQLLEH (98 aa)) folds into the Fibronectin type-III 1 domain. Ig-like domains lie at 1389 to 1485 (PPLE…VTLE) and 1490 to 1578 (PRFE…AELS). Cysteine 1413 and cysteine 1469 form a disulfide bridge. Residues 1606–1859 (YDIHQEIGRG…AEETLEHPWF (254 aa)) enclose the Protein kinase 1 domain. Residues 1612–1620 (IGRGAFSYL) and lysine 1635 contribute to the ATP site. Aspartate 1724 acts as the Proton acceptor in catalysis. The segment at 1913–2571 (MPRRQPPSGG…SQPNLSSSVQ (659 aa)) is disordered. Residues 1918–1927 (PPSGGLSSSS) are compositionally biased toward low complexity. Residues 1980–1990 (EQERTPSKDQE) are compositionally biased toward basic and acidic residues. Serine 1993, serine 2004, serine 2019, serine 2020, and serine 2042 each carry phosphoserine. Basic and acidic residues predominate over residues 2009 to 2019 (SPRRPELRRGS). Arginine 2060 carries the asymmetric dimethylarginine; alternate modification. The residue at position 2060 (arginine 2060) is an Omega-N-methylarginine; alternate. A compositionally biased stretch (low complexity) spans 2069–2081 (AQRLQALRQRLLR). Serine 2114 and serine 2135 each carry phosphoserine. Arginine 2144 bears the Omega-N-methylarginine mark. Positions 2168–2179 (ESPSLSALSETQ) are enriched in polar residues. Serine 2182 and serine 2207 each carry phosphoserine. Residues 2193-2207 (ITKSPEPSAVTSRDS) show a composition bias toward polar residues. Residues 2208–2218 (PQPPEPQPVPE) are compositionally biased toward pro residues. The span at 2219-2229 (KVPEPKPEPVR) shows a compositional bias: basic and acidic residues. Residues 2230–2268 (AAKPAQPPLALQMPTQPLTPYAQIMQSLQLSSPTLSPQD) are compositionally biased toward low complexity. Residues 2337–2348 (FEAKFKRSRESP) show a composition bias toward basic and acidic residues. Residues 2349-2358 (LSRGLRLLSR) show a composition bias toward low complexity. The segment covering 2359–2375 (SRSEERGPFRGAEDDGI) has biased composition (basic and acidic residues). Serine 2379 is modified (phosphoserine). Position 2383 is a phosphothreonine (threonine 2383). Residues 2387-2398 (LVRRPERSRSVQ) are compositionally biased toward basic and acidic residues. Residues serine 2413, serine 2417, serine 2441, serine 2442, serine 2447, and serine 2451 each carry the phosphoserine modification. A compositionally biased stretch (low complexity) spans 2461–2487 (SSTLERLSSRLQRSGSSEDSGGASGRS). Over residues 2513–2523 (QLGSQTGATTP) the composition is skewed to polar residues. Residues serine 2524 and serine 2527 each carry the phosphoserine modification. Residues 2524-2543 (SAESLGSEASGTSGSSAPGE) are compositionally biased toward low complexity. Positions 2546-2557 (SRHRWGLSRLRK) are enriched in basic residues. Position 2562 is a phosphoserine (serine 2562). A compositionally biased stretch (polar residues) spans 2562–2571 (SQPNLSSSVQ). The region spanning 2586–2676 (PPVFHIKLKD…GSITSSCTVA (91 aa)) is the Ig-like 9 domain. A disulfide bridge connects residues cysteine 2608 and cysteine 2660. Residues 2683-2777 (KLAPPEVPQT…KVFIRGTPDS (95 aa)) form the Fibronectin type-III 2 domain. 3 disordered regions span residues 2756 to 2832 (RAGQ…MSAN), 2857 to 2899 (ATQQ…PAPS), and 2912 to 2960 (APPA…PQKP). Threonine 2774 is modified (phosphothreonine). Low complexity-rich tracts occupy residues 2775 to 2789 (PDSP…RDAP) and 2803 to 2831 (PTSL…SMSA). Residue serine 2777 is modified to Phosphoserine. The 104-residue stretch at 2865–2968 (PPSIVVTPSE…KPYTFLEEKA (104 aa)) folds into the Fibronectin type-III 3 domain. Positions 2883–2899 (GTLTPTSSPQGVKPAPS) are enriched in polar residues. The span at 2913–2927 (PPAPQAPAPEPPPEP) shows a compositional bias: pro residues. Residues 2943–2953 (SSPTPESTTLR) are compositionally biased toward polar residues. Serine 2944 bears the Phosphoserine mark. Residues 2946–3213 (TPESTTLRQG…LQDCLAHPWL (268 aa)) enclose the Protein kinase 2 domain. The active-site Proton acceptor is aspartate 3080.

The protein belongs to the protein kinase superfamily. CAMK Ser/Thr protein kinase family. Interacts with MTM1. Isoform 3 is found as a monomer or homodimer. In terms of processing, may be autophosphorylated. In terms of tissue distribution, isoform 1 is preferentially expressed in striated muscle. Non-kinase form such as isoform 3 is predominantly expressed in the aorta. Isoform 3 appears to be expressed only in highly differentiated ASMC in normal vessel walls and down-regulated in dedifferentiated ASMC in vivo. In response to vascular injuries ASMC dedifferentiate and change from a quiescent and contractile phenotype to a proliferative and synthetic phenotype. This proliferation of vascular smooth muscle cells is one of the most prominent features of atherosclerosis. Isoform 1 and isoform 4 are expressed in cardiomyocytes of the developing heart.

It is found in the nucleus. The catalysed reaction is L-seryl-[protein] + ATP = O-phospho-L-seryl-[protein] + ADP + H(+). It catalyses the reaction L-threonyl-[protein] + ATP = O-phospho-L-threonyl-[protein] + ADP + H(+). Its function is as follows. Isoform 3 may have a role in regulating the growth and differentiation of arterial smooth muscle cells. The chain is Striated muscle-specific serine/threonine-protein kinase (Speg) from Mus musculus (Mouse).